The sequence spans 328 residues: scyllo-inositol 2-dehydrogenase (NADP(+)) IolU (328 aa).

It belongs to the Gfo/Idh/MocA family.

It carries out the reaction scyllo-inositol + NADP(+) = scyllo-inosose + NADPH + H(+). Functionally, catalyzes the NADPH-dependent reduction of scyllo-inosose (SIS) to scyllo-inositol (SI) in vitro, but is unable to dehydrogenate scyllo-inositol and myo-inositol. Is less efficient than the functional paralog IolW. Under physiological conditions, may primarily function as an NADPH-dependent oxidoreductase that reduces carbonyl group(s) in its substrates. Cannot use NADH instead of NADPH. The chain is scyllo-inositol 2-dehydrogenase (NADP(+)) IolU from Bacillus subtilis (strain 168).